The following is a 107-amino-acid chain: Cytochrome c-550 (107 aa).

Residues Cys11, Cys14, His15, and Met80 each contribute to the heme c site.

Binds 1 heme c group covalently per subunit.

The polypeptide is Cytochrome c-550 (Ancylobacter novellus (Thiobacillus novellus)).